The chain runs to 166 residues: uncharacterized protein (166 aa).

A helical transmembrane segment spans residues 34 to 54 (FWGKVLVLTFGIICVVFVIFM). Disordered stretches follow at residues 73 to 93 (QRTQ…SQQF) and 123 to 166 (TSTP…NDEV).

It is found in the vacuole membrane. This is an uncharacterized protein from Schizosaccharomyces pombe (strain 972 / ATCC 24843) (Fission yeast).